We begin with the raw amino-acid sequence, 93 residues long: DNA-directed RNA polymerase subunit omega (93 aa).

It belongs to the RNA polymerase subunit omega family. In terms of assembly, the RNAP catalytic core consists of 2 alpha, 1 beta, 1 beta' and 1 omega subunit. When a sigma factor is associated with the core the holoenzyme is formed, which can initiate transcription.

It catalyses the reaction RNA(n) + a ribonucleoside 5'-triphosphate = RNA(n+1) + diphosphate. In terms of biological role, promotes RNA polymerase assembly. Latches the N- and C-terminal regions of the beta' subunit thereby facilitating its interaction with the beta and alpha subunits. The polypeptide is DNA-directed RNA polymerase subunit omega (Shewanella loihica (strain ATCC BAA-1088 / PV-4)).